Here is a 444-residue protein sequence, read N- to C-terminus: Sensor protein CiaH (444 aa).

Transmembrane regions (helical) follow at residues 21–41 (FGVFTLIFSTMTLIILQVMHS) and 183–203 (LIVVVMASFWILSLLASLYLA). In terms of domain architecture, Histidine kinase spans 223–438 (NASHELRTPL…IFEVKIAIQT (216 aa)). A Phosphohistidine; by autocatalysis modification is found at His226.

It is found in the cell membrane. The catalysed reaction is ATP + protein L-histidine = ADP + protein N-phospho-L-histidine.. Member of the two-component regulatory system CiaH/CiaR. Involved in early steps of competence regulation and in penicillin susceptibility. Probably phosphorylates CiaR. The polypeptide is Sensor protein CiaH (ciaH) (Streptococcus pneumoniae serotype 4 (strain ATCC BAA-334 / TIGR4)).